A 222-amino-acid chain; its full sequence is Coiled-coil domain-containing protein 70 (222 aa).

Coiled coils occupy residues 34–62 (LQEE…WNFR) and 129–188 (NALW…KAAW).

This Bos taurus (Bovine) protein is Coiled-coil domain-containing protein 70 (CCDC70).